The primary structure comprises 228 residues: Phosphoribosylformylglycinamidine synthase subunit PurQ (228 aa).

The region spanning 3-225 (FAVLVFPGSN…LTTLKSGVVT (223 aa)) is the Glutamine amidotransferase type-1 domain. Residue C86 is the Nucleophile of the active site. Active-site residues include H194 and E196.

In terms of assembly, part of the FGAM synthase complex composed of 1 PurL, 1 PurQ and 2 PurS subunits.

The protein resides in the cytoplasm. It catalyses the reaction N(2)-formyl-N(1)-(5-phospho-beta-D-ribosyl)glycinamide + L-glutamine + ATP + H2O = 2-formamido-N(1)-(5-O-phospho-beta-D-ribosyl)acetamidine + L-glutamate + ADP + phosphate + H(+). The enzyme catalyses L-glutamine + H2O = L-glutamate + NH4(+). The protein operates within purine metabolism; IMP biosynthesis via de novo pathway; 5-amino-1-(5-phospho-D-ribosyl)imidazole from N(2)-formyl-N(1)-(5-phospho-D-ribosyl)glycinamide: step 1/2. In terms of biological role, part of the phosphoribosylformylglycinamidine synthase complex involved in the purines biosynthetic pathway. Catalyzes the ATP-dependent conversion of formylglycinamide ribonucleotide (FGAR) and glutamine to yield formylglycinamidine ribonucleotide (FGAM) and glutamate. The FGAM synthase complex is composed of three subunits. PurQ produces an ammonia molecule by converting glutamine to glutamate. PurL transfers the ammonia molecule to FGAR to form FGAM in an ATP-dependent manner. PurS interacts with PurQ and PurL and is thought to assist in the transfer of the ammonia molecule from PurQ to PurL. The polypeptide is Phosphoribosylformylglycinamidine synthase subunit PurQ (Latilactobacillus sakei subsp. sakei (strain 23K) (Lactobacillus sakei subsp. sakei)).